Reading from the N-terminus, the 41-residue chain is Pi-stichotoxin-Hcr5c (41 aa).

3 disulfides stabilise this stretch: Cys4/Cys37, Cys6/Cys30, and Cys20/Cys38.

It belongs to the sea anemone type 3 (BDS) potassium channel toxin family.

The protein resides in the secreted. Its subcellular location is the nematocyst. Weakly and reversibly inhibits rat homomeric ASIC1 (isoform ASIC1a) (IC(50)=4.95 uM), and ASIC3 (IC(50)=17 uM). ASIC1a current inhibition and ASIC3 transient current inhibition are not complete, and reach a maximum of 70% inhibition and 80%, respectively. The chain is Pi-stichotoxin-Hcr5c from Radianthus crispa (Leathery sea anemone).